Here is a 63-residue protein sequence, read N- to C-terminus: Jingdongin-1 (63 aa).

Positions 1–22 (MLTLKKSMLLLFFLGTINLSLC) are cleaved as a signal peptide. The propeptide occupies 23–44 (EQERDADEEERRDDDEMDVEVE). The cysteines at positions 57 and 63 are disulfide-linked.

As to expression, expressed by the skin glands.

It localises to the secreted. In terms of biological role, the synthetic peptide has antimicrobial activity against Gram-negative bacterium B.dysenteriae (MIC=35 ug/ml), against Gram-positive bacteria S.aureus ATCC 2592 (MIC=4.7 ug/ml) and B.subtilis ATCC 6633 (MIC=9.38 ug/ml) and against fungus C.albicans (MIC=18.75 ug/ml). Has no activity against Gram-negative bacterium E.coli ATCC 25922 but exhibits low hemolytic activity at concentrations up to 200 ug/ml. In Amolops jingdongensis (Chinese torrent frog), this protein is Jingdongin-1.